A 146-amino-acid polypeptide reads, in one-letter code: SecB-like chaperone SmegB (146 aa).

The protein belongs to the SecB-like family.

Functionally, chaperone component of an orphan antitoxin chaperone (AC) system; there is no toxin gene in close genomic proximity. When expressed in E.coli complements the cold-sensitive phenotype of a secB deletion, suggesting it may have a generic chaperone function. Does not however complement the toxin-neutralizing effect of its M.tuberculosis paralog Rv1957 (AC P95257) in E.coli, probably because the antitoxin genes are not from the same family. The protein is SecB-like chaperone SmegB of Mycolicibacterium smegmatis (strain ATCC 700084 / mc(2)155) (Mycobacterium smegmatis).